We begin with the raw amino-acid sequence, 370 residues long: Isopentenyl-diphosphate delta-isomerase (370 aa).

8-9 (RK) lines the substrate pocket. FMN contacts are provided by residues threonine 65, 66–68 (GMT), serine 99, and asparagine 127. 99–101 (SQR) is a binding site for substrate. Glutamine 166 serves as a coordination point for substrate. Residue glutamate 167 participates in Mg(2+) binding. FMN-binding positions include lysine 198, serine 223, threonine 228, 277–279 (GMR), and 298–299 (AL).

Belongs to the IPP isomerase type 2 family. Homooctamer. Dimer of tetramers. FMN serves as cofactor. The cofactor is NADPH. Mg(2+) is required as a cofactor.

The protein localises to the cytoplasm. The enzyme catalyses isopentenyl diphosphate = dimethylallyl diphosphate. Functionally, involved in the biosynthesis of isoprenoids. Catalyzes the 1,3-allylic rearrangement of the homoallylic substrate isopentenyl (IPP) to its allylic isomer, dimethylallyl diphosphate (DMAPP). The chain is Isopentenyl-diphosphate delta-isomerase from Pyrococcus abyssi (strain GE5 / Orsay).